A 117-amino-acid polypeptide reads, in one-letter code: UPF0145 protein PH1682 (117 aa).

This sequence belongs to the UPF0145 family.

In Pyrococcus horikoshii (strain ATCC 700860 / DSM 12428 / JCM 9974 / NBRC 100139 / OT-3), this protein is UPF0145 protein PH1682.